Consider the following 148-residue polypeptide: Probable DNA-directed RNA polymerases I, II, and III subunit RPABC3 (148 aa).

The non-specific ssDNA binding stretch occupies residues 16–40 (DPDGKKFDRVSRYFCDAESFKMELI).

It belongs to the eukaryotic RPB8 RNA polymerase subunit family. In terms of assembly, component of the RNA polymerase I (Pol I), RNA polymerase II (Pol II) and RNA polymerase III (Pol III) complexes consisting of at least 13, 12 and 17 subunits, respectively. Directly interacts with POLR2A.

It is found in the nucleus. DNA-dependent RNA polymerase catalyzes the transcription of DNA into RNA using the four ribonucleoside triphosphates as substrates. Common component of RNA polymerases I, II and III which synthesize ribosomal RNA precursors, mRNA precursors and many functional non-coding RNAs, and small RNAs, such as 5S rRNA and tRNAs, respectively. This chain is Probable DNA-directed RNA polymerases I, II, and III subunit RPABC3 (rpb-8), found in Caenorhabditis elegans.